The sequence spans 599 residues: 1-deoxy-D-xylulose-5-phosphate synthase (599 aa).

Thiamine diphosphate-binding positions include histidine 63 and 104–106 (GHS). Aspartate 135 contributes to the Mg(2+) binding site. Residues 136 to 137 (GA), asparagine 164, tyrosine 271, and glutamate 352 contribute to the thiamine diphosphate site. Residue asparagine 164 participates in Mg(2+) binding.

Belongs to the transketolase family. DXPS subfamily. In terms of assembly, homodimer. Requires Mg(2+) as cofactor. It depends on thiamine diphosphate as a cofactor.

The enzyme catalyses D-glyceraldehyde 3-phosphate + pyruvate + H(+) = 1-deoxy-D-xylulose 5-phosphate + CO2. The protein operates within metabolic intermediate biosynthesis; 1-deoxy-D-xylulose 5-phosphate biosynthesis; 1-deoxy-D-xylulose 5-phosphate from D-glyceraldehyde 3-phosphate and pyruvate: step 1/1. Catalyzes the acyloin condensation reaction between C atoms 2 and 3 of pyruvate and glyceraldehyde 3-phosphate to yield 1-deoxy-D-xylulose-5-phosphate (DXP). This is 1-deoxy-D-xylulose-5-phosphate synthase from Nitratiruptor sp. (strain SB155-2).